The chain runs to 436 residues: Histidinol dehydrogenase (436 aa).

Positions 135, 197, and 220 each coordinate NAD(+). Residues T243, Q265, and H268 each coordinate substrate. Residues Q265 and H268 each coordinate Zn(2+). Active-site proton acceptor residues include E334 and H335. 4 residues coordinate substrate: H335, D368, E422, and H427. D368 provides a ligand contact to Zn(2+). Zn(2+) is bound at residue H427.

The protein belongs to the histidinol dehydrogenase family. It depends on Zn(2+) as a cofactor.

It catalyses the reaction L-histidinol + 2 NAD(+) + H2O = L-histidine + 2 NADH + 3 H(+). The protein operates within amino-acid biosynthesis; L-histidine biosynthesis; L-histidine from 5-phospho-alpha-D-ribose 1-diphosphate: step 9/9. Catalyzes the sequential NAD-dependent oxidations of L-histidinol to L-histidinaldehyde and then to L-histidine. This is Histidinol dehydrogenase from Deinococcus radiodurans (strain ATCC 13939 / DSM 20539 / JCM 16871 / CCUG 27074 / LMG 4051 / NBRC 15346 / NCIMB 9279 / VKM B-1422 / R1).